The following is a 124-amino-acid chain: Putative B3 domain-containing protein At1g51970 (124 aa).

A DNA-binding region (TF-B3) is located at residues 18–124; that stretch reads VLKKNLTESD…SRRFLFHHIN (107 aa).

It localises to the nucleus. The sequence is that of Putative B3 domain-containing protein At1g51970 from Arabidopsis thaliana (Mouse-ear cress).